The primary structure comprises 336 residues: Glycerol-3-phosphate dehydrogenase [NAD(P)+] (336 aa).

Positions 16, 17, 37, and 111 each coordinate NADPH. Sn-glycerol 3-phosphate contacts are provided by K111, G140, and T142. A144 is an NADPH binding site. K196, D249, S259, R260, and N261 together coordinate sn-glycerol 3-phosphate. K196 serves as the catalytic Proton acceptor. Residue R260 coordinates NADPH. NADPH-binding residues include V284 and E286.

This sequence belongs to the NAD-dependent glycerol-3-phosphate dehydrogenase family.

Its subcellular location is the cytoplasm. The catalysed reaction is sn-glycerol 3-phosphate + NAD(+) = dihydroxyacetone phosphate + NADH + H(+). It catalyses the reaction sn-glycerol 3-phosphate + NADP(+) = dihydroxyacetone phosphate + NADPH + H(+). It participates in membrane lipid metabolism; glycerophospholipid metabolism. Functionally, catalyzes the reduction of the glycolytic intermediate dihydroxyacetone phosphate (DHAP) to sn-glycerol 3-phosphate (G3P), the key precursor for phospholipid synthesis. The protein is Glycerol-3-phosphate dehydrogenase [NAD(P)+] of Actinobacillus pleuropneumoniae serotype 5b (strain L20).